A 167-amino-acid polypeptide reads, in one-letter code: Leptin (167 aa).

An N-terminal signal peptide occupies residues 1–21 (MYWRTLWGFLWLWPYLFYIQA). A disulfide bond links Cys-117 and Cys-167.

The protein belongs to the leptin family.

The protein resides in the secreted. Key player in the regulation of energy balance and body weight control. Once released into the circulation, has central and peripheral effects by binding LEPR, found in many tissues, which results in the activation of several major signaling pathways. In the hypothalamus, acts as an appetite-regulating factor that induces a decrease in food intake and an increase in energy consumption by inducing anorexinogenic factors and suppressing orexigenic neuropeptides, also regulates bone mass and secretion of hypothalamo-pituitary-adrenal hormones. In the periphery, increases basal metabolism, influences reproductive function, regulates pancreatic beta-cell function and insulin secretion, is pro-angiogenic for endothelial cell and affects innate and adaptive immunity. In the arcuate nucleus of the hypothalamus, activates by depolarization POMC neurons inducing FOS and SOCS3 expression to release anorexigenic peptides and inhibits by hyperpolarization NPY neurons inducing SOCS3 with a consequent reduction on release of orexigenic peptides. In addition to its known satiety inducing effect, has a modulatory role in nutrient absorption. In the intestine, reduces glucose absorption by enterocytes by activating PKC and leading to a sequential activation of p38, PI3K and ERK signaling pathways which exerts an inhibitory effect on glucose absorption. Acts as a growth factor on certain tissues, through the activation of different signaling pathways increases expression of genes involved in cell cycle regulation such as CCND1, via JAK2-STAT3 pathway, or VEGFA, via MAPK1/3 and PI3K-AKT1 pathways. May also play an apoptotic role via JAK2-STAT3 pathway and up-regulation of BIRC5 expression. Pro-angiogenic, has mitogenic activity on vascular endothelial cells and plays a role in matrix remodeling by regulating the expression of matrix metalloproteinases (MMPs) and tissue inhibitors of metalloproteinases (TIMPs). In innate immunity, modulates the activity and function of neutrophils by increasing chemotaxis and the secretion of oxygen radicals. Increases phagocytosis by macrophages and enhances secretion of pro-inflammatory mediators. Increases cytotoxic ability of NK cells. Plays a pro-inflammatory role, in synergy with IL1B, by inducing NOS2 which promotes the production of IL6, IL8 and Prostaglandin E2, through a signaling pathway that involves JAK2, PI3K, MAP2K1/MEK1 and MAPK14/p38. In adaptive immunity, promotes the switch of memory T-cells towards T helper-1 cell immune responses. Increases CD4(+)CD25(-) T-cell proliferation and reduces autophagy during TCR (T-cell receptor) stimulation, through MTOR signaling pathway activation and BCL2 up-regulation. This is Leptin (LEP) from Macaca mulatta (Rhesus macaque).